The chain runs to 493 residues: MDSVIRALQPYFERIPSVERPKGHVHFREKFGWTAAILLLYFILSNVPVFGLSPESIDIFAAYRALFAGSTGSIIALGIGPIVTASIILQLLVGAGIIKLDLTNPEDRAAYQDFQRFLVFVMIAVEAIPQIAGGLLKPDLNLAAQLGVSPGIISFLIFIQLFIGGVLIVYMDEVVSKWGIGSGVSLFILAGIAQSIVVGLFNWVIPPNSAMPAGIIPRWIWIAQNYPLDQLFTGSGLAFLLIQGGILALITTAAIILLVVFFEGTRVEIPLAHAVARGARGRFPIKLIYASVLPMIFVRALQANVVALGQVLHARGVTIFGEFVNGKAVSGLMFFLQPVSSPYDWIPSLVKSQGAAFAAIPDWMIYLHLLIDALILVVGGIIFAWFWVETSGMDARTVASQIAKSGMQVPGFRKSPQVLERVLSRYIPKVTILGGAIIGILTLVANMLGTIGNVSGTGLLLAVSIAYRFYEDLAKEQLTEMHPLIRRMLGEEA.

Residues 1–21 lie on the Cytoplasmic side of the membrane; that stretch reads MDSVIRALQPYFERIPSVERP. A helical transmembrane segment spans residues 22-48; the sequence is KGHVHFREKFGWTAAILLLYFILSNVP. Residues 49–59 lie on the Extracellular side of the membrane; the sequence is VFGLSPESIDI. Residues 60 to 67 constitute an intramembrane region (helical); the sequence is FAAYRALF. The discontinuously helical transmembrane segment at 60-88 threads the bilayer; it reads FAAYRALFAGSTGSIIALGIGPIVTASII. Residues 68–79 lie within the membrane without spanning it; sequence AGSTGSIIALGI. Residues 80–88 constitute an intramembrane region (helical); the sequence is GPIVTASII. The Cytoplasmic segment spans residues 89 to 109; that stretch reads LQLLVGAGIIKLDLTNPEDRA. A helical transmembrane segment spans residues 110–134; that stretch reads AYQDFQRFLVFVMIAVEAIPQIAGG. Topologically, residues 135-151 are extracellular; sequence LLKPDLNLAAQLGVSPG. Residues 152–176 form a helical membrane-spanning segment; that stretch reads IISFLIFIQLFIGGVLIVYMDEVVS. Residues 177 to 182 lie on the Cytoplasmic side of the membrane; that stretch reads KWGIGS. The chain crosses the membrane as a helical span at residues 183–201; that stretch reads GVSLFILAGIAQSIVVGLF. Residues 202–244 are Extracellular-facing; sequence NWVIPPNSAMPAGIIPRWIWIAQNYPLDQLFTGSGLAFLLIQG. Residues 245-266 form a helical membrane-spanning segment; that stretch reads GILALITTAAIILLVVFFEGTR. Topologically, residues 267 to 291 are cytoplasmic; that stretch reads VEIPLAHAVARGARGRFPIKLIYAS. Residues 292–313 form a helical membrane-spanning segment; that stretch reads VLPMIFVRALQANVVALGQVLH. Residues 314–367 lie on the Extracellular side of the membrane; it reads ARGVTIFGEFVNGKAVSGLMFFLQPVSSPYDWIPSLVKSQGAAFAAIPDWMIYL. Residues 368–387 traverse the membrane as a helical segment; that stretch reads HLLIDALILVVGGIIFAWFW. Residues 388-430 are Cytoplasmic-facing; that stretch reads VETSGMDARTVASQIAKSGMQVPGFRKSPQVLERVLSRYIPKV. A helical transmembrane segment spans residues 431 to 449; the sequence is TILGGAIIGILTLVANMLG. The Extracellular segment spans residues 450–454; the sequence is TIGNV. A helical transmembrane segment spans residues 455–469; that stretch reads SGTGLLLAVSIAYRF. Over 470-493 the chain is Cytoplasmic; sequence YEDLAKEQLTEMHPLIRRMLGEEA.

It belongs to the SecY/SEC61-alpha family. Component of the Sec protein translocase complex. Heterotrimer consisting of alpha (SecY), beta (SecG) and gamma (SecE) subunits. The heterotrimers can form oligomers, although 1 heterotrimer is thought to be able to translocate proteins. Interacts with the ribosome. May interact with SecDF, and other proteins may be involved.

The protein resides in the cell membrane. Its function is as follows. The central subunit of the protein translocation channel SecYEG. Consists of two halves formed by TMs 1-5 and 6-10. These two domains form a lateral gate at the front which open onto the bilayer between TMs 2 and 7, and are clamped together by SecE at the back. The channel is closed by both a pore ring composed of hydrophobic SecY resides and a short helix (helix 2A) on the extracellular side of the membrane which forms a plug. The plug probably moves laterally to allow the channel to open. The ring and the pore may move independently. The protein is Protein translocase subunit SecY of Archaeoglobus fulgidus (strain ATCC 49558 / DSM 4304 / JCM 9628 / NBRC 100126 / VC-16).